The primary structure comprises 376 residues: MKALLVLEDGFTLEGKSFTGDFETGGEVIFTTGMTGYQEILTDPSYYGQMVCMTYPLIGNYGTCREDMESAGVHCAALLVKECCKKPSNWRSTMSLPEFMKRYEKPGVEGLDTRALTRHLRMNGAMRGIISTRETDPAVLQERARALPAMKGHNLVPFVAPEKPYAWYDNAVQEVTVAEDGSYAWRGTGLPLLVYDFGIKWNILRRLCEAGFEPLAVPPGFSPARAKASGAKGVFLSNGPGDPATLTSEIALVRELIHMLPVTGICLGHQLIGHALGARTEKLKFGHHGCNHPVKDLTTGRIEISSQNHGFHVVLDDVDDVEATHVNLNDQTLEGLRHKTLPVMSLQYHPEAAAGPHDGEYLFNRFRKIIGESAGA.

Residues 1–187 (MKALLVLEDG…AEDGSYAWRG (187 aa)) are CPSase. Residues serine 45, glycine 239, and glycine 241 each coordinate L-glutamine. Residues 191–376 (PLLVYDFGIK…RKIIGESAGA (186 aa)) enclose the Glutamine amidotransferase type-1 domain. Catalysis depends on cysteine 266, which acts as the Nucleophile. L-glutamine contacts are provided by leucine 267, glutamine 270, asparagine 308, glycine 310, and phenylalanine 311. Residues histidine 349 and glutamate 351 contribute to the active site.

The protein belongs to the CarA family. Composed of two chains; the small (or glutamine) chain promotes the hydrolysis of glutamine to ammonia, which is used by the large (or ammonia) chain to synthesize carbamoyl phosphate. Tetramer of heterodimers (alpha,beta)4.

It catalyses the reaction hydrogencarbonate + L-glutamine + 2 ATP + H2O = carbamoyl phosphate + L-glutamate + 2 ADP + phosphate + 2 H(+). The catalysed reaction is L-glutamine + H2O = L-glutamate + NH4(+). The protein operates within amino-acid biosynthesis; L-arginine biosynthesis; carbamoyl phosphate from bicarbonate: step 1/1. It functions in the pathway pyrimidine metabolism; UMP biosynthesis via de novo pathway; (S)-dihydroorotate from bicarbonate: step 1/3. Its function is as follows. Small subunit of the glutamine-dependent carbamoyl phosphate synthetase (CPSase). CPSase catalyzes the formation of carbamoyl phosphate from the ammonia moiety of glutamine, carbonate, and phosphate donated by ATP, constituting the first step of 2 biosynthetic pathways, one leading to arginine and/or urea and the other to pyrimidine nucleotides. The small subunit (glutamine amidotransferase) binds and cleaves glutamine to supply the large subunit with the substrate ammonia. This Desulfovibrio desulfuricans (strain ATCC 27774 / DSM 6949 / MB) protein is Carbamoyl phosphate synthase small chain.